The sequence spans 186 residues: Transcription factor FapR (186 aa).

It belongs to the FapR family.

Transcriptional factor involved in regulation of membrane lipid biosynthesis by repressing genes involved in fatty acid and phospholipid metabolism. The polypeptide is Transcription factor FapR (Staphylococcus epidermidis (strain ATCC 35984 / DSM 28319 / BCRC 17069 / CCUG 31568 / BM 3577 / RP62A)).